Consider the following 272-residue polypeptide: Indole-3-glycerol phosphate synthase (272 aa).

Belongs to the TrpC family.

The catalysed reaction is 1-(2-carboxyphenylamino)-1-deoxy-D-ribulose 5-phosphate + H(+) = (1S,2R)-1-C-(indol-3-yl)glycerol 3-phosphate + CO2 + H2O. It functions in the pathway amino-acid biosynthesis; L-tryptophan biosynthesis; L-tryptophan from chorismate: step 4/5. This chain is Indole-3-glycerol phosphate synthase, found in Mycobacterium leprae (strain Br4923).